Reading from the N-terminus, the 239-residue chain is Ribosomal RNA small subunit methyltransferase G (239 aa).

S-adenosyl-L-methionine is bound by residues G78, F83, 129-130 (AE), and R148.

Belongs to the methyltransferase superfamily. RNA methyltransferase RsmG family.

It localises to the cytoplasm. Specifically methylates the N7 position of a guanine in 16S rRNA. This is Ribosomal RNA small subunit methyltransferase G from Clostridium botulinum (strain Alaska E43 / Type E3).